The following is a 359-amino-acid chain: UDP-3-O-acylglucosamine N-acyltransferase (359 aa).

His256 functions as the Proton acceptor in the catalytic mechanism.

It belongs to the transferase hexapeptide repeat family. LpxD subfamily. In terms of assembly, homotrimer.

It catalyses the reaction a UDP-3-O-[(3R)-3-hydroxyacyl]-alpha-D-glucosamine + a (3R)-hydroxyacyl-[ACP] = a UDP-2-N,3-O-bis[(3R)-3-hydroxyacyl]-alpha-D-glucosamine + holo-[ACP] + H(+). Its pathway is bacterial outer membrane biogenesis; LPS lipid A biosynthesis. In terms of biological role, catalyzes the N-acylation of UDP-3-O-acylglucosamine using 3-hydroxyacyl-ACP as the acyl donor. Is involved in the biosynthesis of lipid A, a phosphorylated glycolipid that anchors the lipopolysaccharide to the outer membrane of the cell. This chain is UDP-3-O-acylglucosamine N-acyltransferase, found in Rhodopseudomonas palustris (strain HaA2).